The primary structure comprises 709 residues: Homeobox-leucine zipper protein TF1 (709 aa).

The homeobox DNA-binding region spans 66-125; the sequence is RKRRLQRLTGKQSEVLEGFFSICGHPDDGQKRHLSETTGLGLDQVKFWFQNKRTQVKTMC. Positions 166–187 form a coiled coil; the sequence is NQLAVEMERLMGQSEWLQQEIA. Residues 212–441 form the START domain; sequence GQHDQQMIAE…MARQSARMRD (230 aa).

It belongs to the HD-ZIP homeobox family. Class IV subfamily.

The protein localises to the nucleus. Its function is as follows. Probable transcription factor. The polypeptide is Homeobox-leucine zipper protein TF1 (TF1) (Oryza sativa subsp. japonica (Rice)).